The sequence spans 132 residues: Large ribosomal subunit protein bL21 (132 aa).

Positions 112–132 (AEKPARKPRAKKTNEVTTDGA) are disordered.

Belongs to the bacterial ribosomal protein bL21 family. As to quaternary structure, part of the 50S ribosomal subunit. Contacts protein L20.

Functionally, this protein binds to 23S rRNA in the presence of protein L20. The protein is Large ribosomal subunit protein bL21 of Dehalococcoides mccartyi (strain ATCC BAA-2266 / KCTC 15142 / 195) (Dehalococcoides ethenogenes (strain 195)).